The chain runs to 115 residues: Large ribosomal subunit protein bL19 (115 aa).

The protein belongs to the bacterial ribosomal protein bL19 family.

In terms of biological role, this protein is located at the 30S-50S ribosomal subunit interface and may play a role in the structure and function of the aminoacyl-tRNA binding site. The sequence is that of Large ribosomal subunit protein bL19 from Bacillus licheniformis (strain ATCC 14580 / DSM 13 / JCM 2505 / CCUG 7422 / NBRC 12200 / NCIMB 9375 / NCTC 10341 / NRRL NRS-1264 / Gibson 46).